The following is a 152-amino-acid chain: Ribosomal RNA large subunit methyltransferase H (152 aa).

S-adenosyl-L-methionine is bound by residues leucine 68, glycine 100, and 119–124 (FGRMTW).

This sequence belongs to the RNA methyltransferase RlmH family. Homodimer.

The protein localises to the cytoplasm. The enzyme catalyses pseudouridine(1915) in 23S rRNA + S-adenosyl-L-methionine = N(3)-methylpseudouridine(1915) in 23S rRNA + S-adenosyl-L-homocysteine + H(+). Its function is as follows. Specifically methylates the pseudouridine at position 1915 (m3Psi1915) in 23S rRNA. The chain is Ribosomal RNA large subunit methyltransferase H from Paramagnetospirillum magneticum (strain ATCC 700264 / AMB-1) (Magnetospirillum magneticum).